Here is a 202-residue protein sequence, read N- to C-terminus: uncharacterized protein (202 aa).

The disordered stretch occupies residues 179-202 (FDEQDSTPELPPNYLLDSQKKSQG).

This is an uncharacterized protein from Haemophilus influenzae (strain ATCC 51907 / DSM 11121 / KW20 / Rd).